We begin with the raw amino-acid sequence, 117 residues long: Large ribosomal subunit protein bL20 (117 aa).

The protein belongs to the bacterial ribosomal protein bL20 family.

In terms of biological role, binds directly to 23S ribosomal RNA and is necessary for the in vitro assembly process of the 50S ribosomal subunit. It is not involved in the protein synthesizing functions of that subunit. The protein is Large ribosomal subunit protein bL20 of Carboxydothermus hydrogenoformans (strain ATCC BAA-161 / DSM 6008 / Z-2901).